We begin with the raw amino-acid sequence, 130 residues long: MKVLNNLLYTGDHEWIRVEDNKAYIGISDCAQRMLSDIVFVELPEVDDEIAKGETFATIESVKAASDSYMPVSGTIVEINEELEDNPAALNEDPYGSWIIAVEMSDKSELEELIKPEVYEKICEELDKEA.

Positions 22–103 constitute a Lipoyl-binding domain; the sequence is KAYIGISDCA…PYGSWIIAVE (82 aa). N6-lipoyllysine is present on lysine 63.

Belongs to the GcvH family. In terms of assembly, the glycine cleavage system is composed of four proteins: P, T, L and H. (R)-lipoate is required as a cofactor.

Functionally, the glycine cleavage system catalyzes the degradation of glycine. The H protein shuttles the methylamine group of glycine from the P protein to the T protein. This is Glycine cleavage system H protein from Clostridium botulinum (strain Kyoto / Type A2).